Here is a 127-residue protein sequence, read N- to C-terminus: Glycine cleavage system H protein (127 aa).

A Lipoyl-binding domain is found at K23–E105. K64 is subject to N6-lipoyllysine.

The protein belongs to the GcvH family. In terms of assembly, the glycine cleavage system is composed of four proteins: P, T, L and H. It depends on (R)-lipoate as a cofactor.

In terms of biological role, the glycine cleavage system catalyzes the degradation of glycine. The H protein shuttles the methylamine group of glycine from the P protein to the T protein. This is Glycine cleavage system H protein from Coprothermobacter proteolyticus (strain ATCC 35245 / DSM 5265 / OCM 4 / BT).